Here is a 152-residue protein sequence, read N- to C-terminus: Ribosome maturation factor RimP (152 aa).

Belongs to the RimP family.

The protein resides in the cytoplasm. In terms of biological role, required for maturation of 30S ribosomal subunits. In Yersinia enterocolitica serotype O:8 / biotype 1B (strain NCTC 13174 / 8081), this protein is Ribosome maturation factor RimP.